The primary structure comprises 69 residues: MLCLPVFIILLLLASPAAPKSLETRIQNDLIRAGLTDADLKTEKGFLSGLLNVAGSVCCKVDTSCCSSQ.

A signal peptide spans 1 to 19 (MLCLPVFIILLLLASPAAP). Positions 20–54 (KSLETRIQNDLIRAGLTDADLKTEKGFLSGLLNVA) are excised as a propeptide.

Belongs to the conotoxin T superfamily. Post-translationally, contains 2 disulfide bonds that can be either 'C1-C3, C2-C4' or 'C1-C4, C2-C3', since these disulfide connectivities have been observed for conotoxins with cysteine framework V (for examples, see AC P0DQQ7 and AC P81755). In terms of tissue distribution, expressed by the venom duct.

Its subcellular location is the secreted. This chain is Conotoxin Lt5.10, found in Conus litteratus (Lettered cone).